A 726-amino-acid polypeptide reads, in one-letter code: Long-chain-fatty-acid--CoA ligase ACSBG1 (726 aa).

The disordered stretch occupies residues 1–39; the sequence is MPDSRAAPQESLLDASLGTTQENVGTSSLTDGQTLSKEP. Polar residues predominate over residues 17-36; that stretch reads LGTTQENVGTSSLTDGQTLS. A Phosphoserine modification is found at serine 36. Tyrosine 641 is subject to Phosphotyrosine. The interval 707 to 726 is disordered; sequence SKQGSSLPGFSLRWQTGASS.

Belongs to the ATP-dependent AMP-binding enzyme family. Bubblegum subfamily.

The protein resides in the cytoplasm. Its subcellular location is the cytoplasmic vesicle. It is found in the microsome. It localises to the endoplasmic reticulum. The protein localises to the cell membrane. It catalyses the reaction a long-chain fatty acid + ATP + CoA = a long-chain fatty acyl-CoA + AMP + diphosphate. The catalysed reaction is (E)-hexadec-2-enoate + ATP + CoA = (2E)-hexadecenoyl-CoA + AMP + diphosphate. It carries out the reaction hexadecanoate + ATP + CoA = hexadecanoyl-CoA + AMP + diphosphate. Its function is as follows. Catalyzes the conversion of fatty acids such as long-chain and very long-chain fatty acids to their active form acyl-CoAs for both synthesis of cellular lipids, and degradation via beta-oxidation. Can activate diverse saturated, monosaturated and polyunsaturated fatty acids. The chain is Long-chain-fatty-acid--CoA ligase ACSBG1 from Bos taurus (Bovine).